We begin with the raw amino-acid sequence, 505 residues long: Zealexin A1 synthase (505 aa).

The helical transmembrane segment at I7–T26 threads the bilayer. C442 serves as a coordination point for heme.

The protein belongs to the cytochrome P450 family. Heme serves as cofactor.

The protein resides in the membrane. It carries out the reaction (S)-beta-macrocarpene + 3 reduced [NADPH--hemoprotein reductase] + 3 O2 = zealexin A1 + 3 oxidized [NADPH--hemoprotein reductase] + 4 H2O + 4 H(+). Its function is as follows. Involved in production of the antifungal phytoalexin zealexin A1. The enzyme sequentially oxidizes(S)-beta-macrocarpene via alcohol and aldehyde intermediates to form zealexin A1, a maize phytoalexin that provides biochemical protection against fungal infection. The chain is Zealexin A1 synthase from Zea mays (Maize).